The sequence spans 168 residues: Thermonuclease (168 aa).

Positions 1–27 (MKKITTGVLILAIAIVVLIFQYINGDG) are cleaved as a signal peptide. Catalysis depends on residues R64, E72, and R114.

Belongs to the thermonuclease family. Requires Ca(2+) as cofactor.

Its subcellular location is the secreted. It catalyses the reaction Endonucleolytic cleavage to nucleoside 3'-phosphates and 3'-phosphooligonucleotide end-products.. In terms of biological role, enzyme that catalyzes the hydrolysis of both DNA and RNA at the 5'-position of the phosphodiester bond. The chain is Thermonuclease (nucI) from Staphylococcus intermedius.